The chain runs to 78 residues: Large ribosomal subunit protein uL29 (78 aa).

Belongs to the universal ribosomal protein uL29 family.

The protein is Large ribosomal subunit protein uL29 of Crocosphaera subtropica (strain ATCC 51142 / BH68) (Cyanothece sp. (strain ATCC 51142)).